Here is a 323-residue protein sequence, read N- to C-terminus: tRNA dimethylallyltransferase (323 aa).

12 to 19 contacts ATP; it reads GPTAAGKT. Residue 14–19 coordinates substrate; the sequence is TAAGKT. Interaction with substrate tRNA stretches follow at residues 37 to 40 and 161 to 165; these read DSAL and QRLIR.

It belongs to the IPP transferase family. Monomer. Mg(2+) serves as cofactor.

It catalyses the reaction adenosine(37) in tRNA + dimethylallyl diphosphate = N(6)-dimethylallyladenosine(37) in tRNA + diphosphate. Functionally, catalyzes the transfer of a dimethylallyl group onto the adenine at position 37 in tRNAs that read codons beginning with uridine, leading to the formation of N6-(dimethylallyl)adenosine (i(6)A). This chain is tRNA dimethylallyltransferase, found in Pseudomonas putida (strain ATCC 47054 / DSM 6125 / CFBP 8728 / NCIMB 11950 / KT2440).